Here is a 77-residue protein sequence, read N- to C-terminus: Large ribosomal subunit protein uL29 (77 aa).

It belongs to the universal ribosomal protein uL29 family.

The polypeptide is Large ribosomal subunit protein uL29 (Mycobacterium sp. (strain JLS)).